Reading from the N-terminus, the 828-residue chain is Protein kintoun (828 aa).

Disordered stretches follow at residues 1–31, 223–250, 383–424, 556–668, and 741–828; these read MSGS…DEPI, KNPT…EGEP, DSGV…PTSN, APVQ…HRGI, and KKNQ…EDLI. The segment covering 9 to 22 has biased composition (basic residues); that stretch reads RNKHSKGNLKHNNN. Position 384 is a phosphoserine (serine 384). Over residues 395 to 414 the composition is skewed to acidic residues; it reads PVEEEEDGEDEIEAEEEEEE. A compositionally biased stretch (basic and acidic residues) spans 556–573; it reads APVQEDKPGDIQFKRNDQ. Residues 591–601 show a composition bias toward acidic residues; that stretch reads EREEGEIEEAE. A compositionally biased stretch (basic residues) spans 606 to 620; sequence KKSASKKQRGKRNKK. The span at 625-641 shows a compositional bias: polar residues; the sequence is SESACVSLPTSVDSQPM. Residues 741–755 show a composition bias toward basic residues; the sequence is KKNQKRRDCKLRAQQ. Serine 759 carries the phosphoserine modification. Basic and acidic residues predominate over residues 788–808; it reads DSGLDLTRHNKKRELAEEADN. The segment covering 815-828 has biased composition (acidic residues); the sequence is EMDDDDDDEDEDLI.

This sequence belongs to the PIH1 family. Kintoun subfamily. As to quaternary structure, interacts with Pp1alpha-96A, Pp1-87B, Pp1-13C and flw.

It localises to the cytoplasm. Its function is as follows. Required for cytoplasmic pre-assembly of axonemal dyneins, thereby playing a central role in motility in cilia and flagella. Involved in pre-assembly of dynein arm complexes in the cytoplasm before intraflagellar transport loads them for the ciliary compartment. In Drosophila willistoni (Fruit fly), this protein is Protein kintoun.